Here is a 460-residue protein sequence, read N- to C-terminus: Omega-3 fatty acid desaturase, chloroplastic (460 aa).

The Histidine box-1 signature appears at His177 to His181. A Histidine box-2 motif is present at residues His213–His217. Residues His380–His384 carry the Histidine box-3 motif.

Belongs to the fatty acid desaturase type 1 family.

It is found in the plastid. The protein resides in the chloroplast membrane. It participates in lipid metabolism; polyunsaturated fatty acid biosynthesis. Its function is as follows. Chloroplast omega-3 fatty acid desaturase introduces the third double bond in the biosynthesis of 16:3 and 18:3 fatty acids, important constituents of plant membranes. It is thought to use ferredoxin as an electron donor and to act on fatty acids esterified to galactolipids, sulfolipids and phosphatidylglycerol. This Ricinus communis (Castor bean) protein is Omega-3 fatty acid desaturase, chloroplastic (FAD7A-1).